We begin with the raw amino-acid sequence, 631 residues long: Pro-interleukin-16 (631 aa).

2 disordered regions span residues glutamate 30–threonine 269 and proline 317–threonine 344. The span at serine 132–serine 144 shows a compositional bias: low complexity. Serine 221 is subject to Phosphoserine. Residues serine 322–threonine 344 show a composition bias toward polar residues. The tract at residues lysine 405–serine 501 is interaction with PPP1R12A, PPP1R12B and PPP1R12C. PDZ domains lie at histidine 411–lysine 496 and threonine 533–lysine 618.

Homotetramer. Pro-interleukin-16 interacts (via PDZ 2 domain) with PPP1R12A, PPP1R12B and PPP1R12C. Pro-interleukin-16 interacts with GRIN2A. Pro-interleukin-16 interacts with GABPB1. Pro-interleukin-16 interacts (via PDZ 3 domain) with HDAC3.

Its subcellular location is the secreted. The protein localises to the cytoplasm. It is found in the nucleus. Functionally, interleukin-16 stimulates a migratory response in CD4+ lymphocytes, monocytes, and eosinophils. Primes CD4+ T-cells for IL-2 and IL-15 responsiveness. Also induces T-lymphocyte expression of interleukin 2 receptor. Ligand for CD4. In terms of biological role, pro-interleukin-16 is involved in cell cycle progression in T-cells. Appears to be involved in transcriptional regulation of SKP2 and is probably part of a transcriptional repression complex on the core promoter of the SKP2 gene. May act as a scaffold for GABPB1 (the DNA-binding subunit the GABP transcription factor complex) and HDAC3 thus maintaining transcriptional repression and blocking cell cycle progression in resting T-cells. In Chlorocebus aethiops (Green monkey), this protein is Pro-interleukin-16 (IL16).